The sequence spans 333 residues: MFNLKNRNFLTLMDFTPKEINYFLDLARDLKRAKYTGTEVQRLKGKNIALIFEKASTRTRCAFEVGAKDQGAHVTYLGPTGSHIGKKESAADTARVLGRMYDGIEYRGFGQEIVETLAEYAGVPVWNGLTDEDHPTQILADFLTIREHFNKPLNEIKFAYVGDGANNMANALMIGAVKMGMDFRIVSPKEIPTDAALVAKCKEIAAGTGAKVTITDNIEEGVKGCDVLYTDVWVSMGEPDSVWESKIKLLTPYRVDMNMIKMTGNPDAKFMHCLPAFHDEETAVGKEIKEKYGLSEMEVSHELFESKYSIVFDEAENRMHTIKAVMVATLGDQ.

Residues 56 to 59 (STRT), Arg-107, and 134 to 137 (HPTQ) contribute to the carbamoyl phosphate site. Residues Asn-167, Asp-231, and 235-236 (SM) contribute to the L-ornithine site. Residues 273–274 (CL) and Arg-318 each bind carbamoyl phosphate.

Belongs to the aspartate/ornithine carbamoyltransferase superfamily. OTCase family.

Its subcellular location is the cytoplasm. It catalyses the reaction carbamoyl phosphate + L-ornithine = L-citrulline + phosphate + H(+). It participates in amino-acid degradation; L-arginine degradation via ADI pathway; carbamoyl phosphate from L-arginine: step 2/2. Reversibly catalyzes the transfer of the carbamoyl group from carbamoyl phosphate (CP) to the N(epsilon) atom of ornithine (ORN) to produce L-citrulline. The protein is Ornithine carbamoyltransferase of Clostridium botulinum (strain Kyoto / Type A2).